Here is a 104-residue protein sequence, read N- to C-terminus: Heme oxygenase (staphylobilin-producing) (104 aa).

One can recognise an ABM domain in the interval 2–94 (FVVTNRITVK…ESSPVISSEI (93 aa)). A Fe cation-binding site is contributed by asparagine 6. Residue histidine 76 coordinates heme.

It belongs to the antibiotic biosynthesis monooxygenase family. Heme-degrading monooxygenase IsdG subfamily. Homodimer.

It localises to the cytoplasm. The enzyme catalyses heme b + 5 AH2 + 4 O2 + 2 H(+) = delta-staphylobilin + Fe(2+) + formaldehyde + 5 A + 4 H2O. It carries out the reaction heme b + 5 AH2 + 4 O2 + 2 H(+) = beta-staphylobilin + Fe(2+) + formaldehyde + 5 A + 4 H2O. In terms of biological role, allows bacterial pathogens to use the host heme as an iron source. Catalyzes the oxidative degradation of the heme macrocyclic porphyrin ring to the oxo-bilirubin chromophore staphylobilin (a mixture of the linear tetrapyrroles 5-oxo-delta-bilirubin and 15-oxo-beta-bilirubin) in the presence of a suitable electron donor such as ascorbate or NADPH--cytochrome P450 reductase, with subsequent release of free iron. This is Heme oxygenase (staphylobilin-producing) (isdG) from Staphylococcus haemolyticus (strain JCSC1435).